We begin with the raw amino-acid sequence, 317 residues long: Succinate receptor 1 (317 aa).

The Extracellular portion of the chain corresponds to 1–23 (MAQNLSCENWLATEAILNKYYLS). N4 carries an N-linked (GlcNAc...) asparagine glycan. Residues 24-47 (AFYAIEFIFGLLGNVTVVFGYLFC) form a helical membrane-spanning segment. The Cytoplasmic segment spans residues 48–55 (MKNWNSSN). The chain crosses the membrane as a helical span at residues 56–76 (VYLFNLSISDFAFLCTLPILI). The Extracellular segment spans residues 77–101 (KSYANDKGTYGDVLCISNRYVLHTN). An intrachain disulfide couples C91 to C168. The helical transmembrane segment at 102–119 (LYTSILFLTFISMDRYLL) threads the bilayer. The Cytoplasmic portion of the chain corresponds to 120–133 (MKYPFREHFLQKKE). The helical transmembrane segment at 134–157 (FAILISLAVWALVTLEVLPMLTFI) threads the bilayer. Topologically, residues 158 to 180 (NSVPKEEGSNCIDYASSGNPEHN) are extracellular. Residues 181–204 (LIYSLCLTLLGFLIPLSVMCFFYY) form a helical membrane-spanning segment. The Cytoplasmic segment spans residues 205–228 (KMVVFLKRRSQQQATALPLDKPQR). Residues 229–246 (LVVLAVVIFSILFTPYHI) form a helical membrane-spanning segment. Topologically, residues 247-277 (MRNLRIASRLDSWPQGCTQKAIKSIYTLTRP) are extracellular. The helical transmembrane segment at 278–294 (LAFLNSAINPIFYFLMG) threads the bilayer. Topologically, residues 295-317 (DHYREMLISKFRQYFKSLTSFRT) are cytoplasmic.

It belongs to the G-protein coupled receptor 1 family. As to expression, predominantly expressed in the kidney (proximal and distal tubules and the juxtaglomerular apparatus). Weakly expressed in liver, spleen and small intestine. Highly expressed in immature dendritic cells, expression rapidly downregulates after maturation. Also expressed in macrophages. Specifically expressed in intestinal tuft cells. Expression in whole muscle is attributable to major non-myofibrillar resident cell types, including stromal, endothelial and satellite cell populations.

It is found in the cell membrane. Its function is as follows. G protein-coupled receptor for succinate able to mediate signaling through Gq/GNAQ or Gi/GNAI second messengers depending on the cell type and the processes regulated. Succinate-SUCNR1 signaling serves as a link between metabolic stress, inflammation and energy homeostasis. In macrophages, plays a range of immune-regulatory roles. During inflammation, succinate-SUCNR1 signaling may act as an anti-inflammatory mediator or boost inflammation depending on the inflammatory status of cells. Hyperpolarizes M2 macrophages versus M1 phenotype through Gq signaling by regulating the transcription of genes involved in immune function. In activated M1 macrophages, plays a pro-inflammatory role in response to LPS. Expressed in dendritic cells, where it is involved in the sensing of immunological danger and enhances immunity. Mediates succinate triggered intracelleular calcium mobilization, induces migratory responses and acts in synergy with Toll-like receptor ligands for the production of proinflammatory cytokines as well as an enhancement of antigen-specific activation of helper T cells. In the small intestine, mediates the activation of tuft cells by dietary succinate and triggers type 2 immunity. In adipocytes, plays an important role in the control of energy metabolism. In response to succinate, controls leptin expression in an AMPK-JNK-CEBPA-dependent as well as circadian clock-regulated manner. In muscle tissue, is expressed in non-muscle cells and coordinates muscle remodeling in response to the succinate produced during exercise training in a paracrine manner. In retina, acts as a mediator of vessel growth during retinal development. In response to succinate, regulates the production of angiogenic factors, including VEGF, by retinal ganglion neurons. In Mus musculus (Mouse), this protein is Succinate receptor 1 (Sucnr1).